The sequence spans 300 residues: Ribosomal RNA small subunit methyltransferase A (300 aa).

Residues N36, V38, G63, E84, D113, and N131 each contribute to the S-adenosyl-L-methionine site.

It belongs to the class I-like SAM-binding methyltransferase superfamily. rRNA adenine N(6)-methyltransferase family. RsmA subfamily.

It is found in the cytoplasm. It carries out the reaction adenosine(1518)/adenosine(1519) in 16S rRNA + 4 S-adenosyl-L-methionine = N(6)-dimethyladenosine(1518)/N(6)-dimethyladenosine(1519) in 16S rRNA + 4 S-adenosyl-L-homocysteine + 4 H(+). Specifically dimethylates two adjacent adenosines (A1518 and A1519) in the loop of a conserved hairpin near the 3'-end of 16S rRNA in the 30S particle. May play a critical role in biogenesis of 30S subunits. The chain is Ribosomal RNA small subunit methyltransferase A from Kineococcus radiotolerans (strain ATCC BAA-149 / DSM 14245 / SRS30216).